The sequence spans 388 residues: Succinate--CoA ligase [ADP-forming] subunit beta (388 aa).

In terms of domain architecture, ATP-grasp spans 9–244 (KSLFAEYGLP…PSQDDAREAH (236 aa)). ATP-binding positions include lysine 46, 53 to 55 (GRG), glutamate 99, threonine 102, and glutamate 107. Residues asparagine 199 and aspartate 213 each coordinate Mg(2+). Residues asparagine 264 and 321 to 323 (GIV) each bind substrate.

This sequence belongs to the succinate/malate CoA ligase beta subunit family. In terms of assembly, heterotetramer of two alpha and two beta subunits. Mg(2+) serves as cofactor.

The catalysed reaction is succinate + ATP + CoA = succinyl-CoA + ADP + phosphate. The enzyme catalyses GTP + succinate + CoA = succinyl-CoA + GDP + phosphate. It participates in carbohydrate metabolism; tricarboxylic acid cycle; succinate from succinyl-CoA (ligase route): step 1/1. In terms of biological role, succinyl-CoA synthetase functions in the citric acid cycle (TCA), coupling the hydrolysis of succinyl-CoA to the synthesis of either ATP or GTP and thus represents the only step of substrate-level phosphorylation in the TCA. The beta subunit provides nucleotide specificity of the enzyme and binds the substrate succinate, while the binding sites for coenzyme A and phosphate are found in the alpha subunit. This chain is Succinate--CoA ligase [ADP-forming] subunit beta, found in Shewanella putrefaciens (strain CN-32 / ATCC BAA-453).